The following is a 227-amino-acid chain: Ubiquitin carboxyl-terminal hydrolase (227 aa).

Residues 3–224 (TWTPLESNPE…VRFTVLALTA (222 aa)) form the UCH catalytic domain. Cys-93 serves as the catalytic Nucleophile. Catalysis depends on His-164, which acts as the Proton donor.

The protein belongs to the peptidase C12 family.

It catalyses the reaction Thiol-dependent hydrolysis of ester, thioester, amide, peptide and isopeptide bonds formed by the C-terminal Gly of ubiquitin (a 76-residue protein attached to proteins as an intracellular targeting signal).. Functionally, ubiquitin-protein hydrolase is involved both in the processing of ubiquitin precursors and of ubiquitinated proteins. This enzyme is a thiol protease that recognizes and hydrolyzes a peptide bond at the C-terminal glycine of ubiquitin. This chain is Ubiquitin carboxyl-terminal hydrolase (Uch), found in Drosophila melanogaster (Fruit fly).